The chain runs to 276 residues: A-factor receptor protein (276 aa).

The region spanning 8-68 (VQTWRSIVDA…AIMDEQTSTV (61 aa)) is the HTH tetR-type domain. Positions 31–50 (AISEILRRAKVTKGALYFHF) form a DNA-binding region, H-T-H motif. Positions 207-220 (EKAEREEQEARIAA) are enriched in basic and acidic residues. The disordered stretch occupies residues 207–276 (EKAEREEQEA…AGVAAGGVVA (70 aa)). Positions 221 to 235 (EAKGAGSDAATDSGS) are enriched in low complexity. Residues 236-257 (RSGGSGLRGGGSGRGPRAGGAG) show a composition bias toward gly residues.

In terms of assembly, homodimer or multimer. Binds to both DNA and A-factor as a homodimer.

It localises to the cytoplasm. In terms of biological role, represses adpA expression by binding to the promoter region in the absence of A-factor, causing repression of streptomycin production and of sporulation. This Streptomyces griseus protein is A-factor receptor protein (arpA).